A 463-amino-acid chain; its full sequence is tRNA (guanine(10)-N(2))-methyltransferase TRMT11 (463 aa).

At alanine 2 the chain carries N-acetylalanine.

This sequence belongs to the class I-like SAM-binding methyltransferase superfamily. TRM11 methyltransferase family. In terms of assembly, part of the heterodimeric TRMT11-TRM112 methyltransferase complex; this complex forms an active tRNA methyltransferase, where TRMT112 acts as an activator of the catalytic subunit TRMT11.

The protein resides in the cytoplasm. The catalysed reaction is guanosine(10) in tRNA + S-adenosyl-L-methionine = N(2)-methylguanosine(10) in tRNA + S-adenosyl-L-homocysteine + H(+). Its function is as follows. Catalytic subunit of the TRMT11-TRM112 methyltransferase complex, that specifically mediates the S-adenosyl-L-methionine-dependent N(2)-methylation of guanosine nucleotide at position 10 (m2G10) in tRNAs. This is one of the major tRNA (guanine-N(2))-methyltransferases. This is tRNA (guanine(10)-N(2))-methyltransferase TRMT11 from Rattus norvegicus (Rat).